The chain runs to 100 residues: Phosphoribosylformylglycinamidine synthase subunit PurS (100 aa).

The protein belongs to the PurS family. As to quaternary structure, homodimer. Part of the FGAM synthase complex composed of 1 PurL, 1 PurQ and 2 PurS subunits.

Its subcellular location is the cytoplasm. It catalyses the reaction N(2)-formyl-N(1)-(5-phospho-beta-D-ribosyl)glycinamide + L-glutamine + ATP + H2O = 2-formamido-N(1)-(5-O-phospho-beta-D-ribosyl)acetamidine + L-glutamate + ADP + phosphate + H(+). It functions in the pathway purine metabolism; IMP biosynthesis via de novo pathway; 5-amino-1-(5-phospho-D-ribosyl)imidazole from N(2)-formyl-N(1)-(5-phospho-D-ribosyl)glycinamide: step 1/2. Functionally, part of the phosphoribosylformylglycinamidine synthase complex involved in the purines biosynthetic pathway. Catalyzes the ATP-dependent conversion of formylglycinamide ribonucleotide (FGAR) and glutamine to yield formylglycinamidine ribonucleotide (FGAM) and glutamate. The FGAM synthase complex is composed of three subunits. PurQ produces an ammonia molecule by converting glutamine to glutamate. PurL transfers the ammonia molecule to FGAR to form FGAM in an ATP-dependent manner. PurS interacts with PurQ and PurL and is thought to assist in the transfer of the ammonia molecule from PurQ to PurL. The protein is Phosphoribosylformylglycinamidine synthase subunit PurS of Synechocystis sp. (strain ATCC 27184 / PCC 6803 / Kazusa).